The chain runs to 342 residues: Ferredoxin--NADP reductase (342 aa).

FAD-binding residues include C17, D36, Q44, Y49, V89, F124, D289, and T330.

This sequence belongs to the ferredoxin--NADP reductase type 2 family. Homodimer. Requires FAD as cofactor.

It carries out the reaction 2 reduced [2Fe-2S]-[ferredoxin] + NADP(+) + H(+) = 2 oxidized [2Fe-2S]-[ferredoxin] + NADPH. In Nitrobacter winogradskyi (strain ATCC 25391 / DSM 10237 / CIP 104748 / NCIMB 11846 / Nb-255), this protein is Ferredoxin--NADP reductase.